The sequence spans 280 residues: Protein HEAT-INDUCED TAS1 TARGET 4 (280 aa).

This sequence belongs to the heat induced plant HTT protein family. As to expression, expressed in seedlings, leaves, stems, inflorescences and siliques.

It is found in the cytoplasm. The protein localises to the nucleus. Mediates both basal and acquired thermotolerance. This Arabidopsis thaliana (Mouse-ear cress) protein is Protein HEAT-INDUCED TAS1 TARGET 4.